A 304-amino-acid polypeptide reads, in one-letter code: Ribonuclease Z (304 aa).

Zn(2+)-binding residues include H61, H63, D65, H66, H138, D206, and H265. The Proton acceptor role is filled by D65.

Belongs to the RNase Z family. In terms of assembly, homodimer. The cofactor is Zn(2+).

The catalysed reaction is Endonucleolytic cleavage of RNA, removing extra 3' nucleotides from tRNA precursor, generating 3' termini of tRNAs. A 3'-hydroxy group is left at the tRNA terminus and a 5'-phosphoryl group is left at the trailer molecule.. Functionally, zinc phosphodiesterase, which displays some tRNA 3'-processing endonuclease activity. Probably involved in tRNA maturation, by removing a 3'-trailer from precursor tRNA. This Lachnospira eligens (strain ATCC 27750 / DSM 3376 / VPI C15-48 / C15-B4) (Eubacterium eligens) protein is Ribonuclease Z.